We begin with the raw amino-acid sequence, 74 residues long: Acyl carrier protein (74 aa).

The Carrier domain maps to 1-73 (MAVFEKVQEI…DLVAYVEEKT (73 aa)). An O-(pantetheine 4'-phosphoryl)serine modification is found at Ser35.

The protein belongs to the acyl carrier protein (ACP) family. In terms of processing, 4'-phosphopantetheine is transferred from CoA to a specific serine of apo-ACP by AcpS. This modification is essential for activity because fatty acids are bound in thioester linkage to the sulfhydryl of the prosthetic group.

The protein localises to the cytoplasm. The protein operates within lipid metabolism; fatty acid biosynthesis. In terms of biological role, carrier of the growing fatty acid chain in fatty acid biosynthesis. The chain is Acyl carrier protein from Streptococcus thermophilus (strain CNRZ 1066).